Reading from the N-terminus, the 494-residue chain is Tripartite motif-containing protein 5 (494 aa).

Ala2 carries the post-translational modification N-acetylalanine. The RING-type zinc-finger motif lies at 15–59 (CPICLELLTQPLSLDCGHSFCQACLTANHKTSMPDEGERSCPVCR). At Ser86 the chain carries Phosphoserine. The B box-type zinc-finger motif lies at 91–133 (QKVDHCARHGEKLLLFCREDRKVICWLCERSQEHRGHHTFLTE). Residues Cys96, His99, Cys118, and His124 each contribute to the Zn(2+) site. Positions 132–241 (TEEVAQEYQV…LISDLEHRLQ (110 aa)) form a coiled coil. The interval 186-199 (FEQLRHILDWVESN) is required for interaction with GABARAP and for autophagy. Residues 282 to 494 (LKVMLKKLRE…VPMTLCSPSS (213 aa)) enclose the B30.2/SPRY domain.

The protein belongs to the TRIM/RBCC family. As to quaternary structure, can form homodimers and homotrimers. In addition to lower-order dimerization, also exhibits a higher-order multimerization and both low- and high-order multimerizations are essential for its restriction activity. Interacts with BTBD1 and BTBD2. Interacts with PSMC4, PSMC5, PSMD7 and HSPA8/HSC70. Interacts (via B30.2/SPRY domain) with HSPA1A/B. Interacts with PSMC2, MAP3K7/TAK1, TAB2 and TAB3. Interacts with SQSTM1. Interacts with TRIM6 and TRIM34. Interacts with ULK1 (phosphorylated form), GABARAP, GABARAPL1, GABARAPL2, MAP1LC3A, MAP1LC3C and BECN1. In terms of processing, degraded in a proteasome-independent fashion in the absence of viral infection but in a proteasome-dependent fashion following exposure to restriction sensitive virus. Autoubiquitinated in a RING finger- and UBE2D2-dependent manner. Monoubiquitinated by TRIM21. Deubiquitinated by Yersinia YopJ. Ubiquitination may not lead to proteasomal degradation.

It is found in the cytoplasm. The protein localises to the nucleus. It carries out the reaction S-ubiquitinyl-[E2 ubiquitin-conjugating enzyme]-L-cysteine + [acceptor protein]-L-lysine = [E2 ubiquitin-conjugating enzyme]-L-cysteine + N(6)-ubiquitinyl-[acceptor protein]-L-lysine.. The protein operates within protein modification; protein ubiquitination. Its function is as follows. Capsid-specific restriction factor that prevents infection from non-host-adapted retroviruses. Blocks viral replication early in the life cycle, after viral entry but before reverse transcription. In addition to acting as a capsid-specific restriction factor, also acts as a pattern recognition receptor that activates innate immune signaling in response to the retroviral capsid lattice. Binding to the viral capsid triggers its E3 ubiquitin ligase activity, and in concert with the heterodimeric ubiquitin conjugating enzyme complex UBE2V1-UBE2N (also known as UBC13-UEV1A complex) generates 'Lys-63'-linked polyubiquitin chains, which in turn are catalysts in the autophosphorylation of the MAP3K7/TAK1 complex (includes TAK1, TAB2, and TAB3). Activation of the MAP3K7/TAK1 complex by autophosphorylation results in the induction and expression of NF-kappa-B and MAPK-responsive inflammatory genes, thereby leading to an innate immune response in the infected cell. Plays a role in regulating autophagy through activation of autophagy regulator BECN1 by causing its dissociation from its inhibitors BCL2 and TAB2. This is Tripartite motif-containing protein 5 (TRIM5) from Nomascus leucogenys (Northern white-cheeked gibbon).